We begin with the raw amino-acid sequence, 228 residues long: 7-cyano-7-deazaguanine synthase (228 aa).

9–19 (LSGGPDSTTVL) is an ATP binding site. Residues cysteine 193, cysteine 203, cysteine 206, and cysteine 209 each coordinate Zn(2+).

The protein belongs to the QueC family. Zn(2+) serves as cofactor.

It catalyses the reaction 7-carboxy-7-deazaguanine + NH4(+) + ATP = 7-cyano-7-deazaguanine + ADP + phosphate + H2O + H(+). Its pathway is purine metabolism; 7-cyano-7-deazaguanine biosynthesis. Functionally, catalyzes the ATP-dependent conversion of 7-carboxy-7-deazaguanine (CDG) to 7-cyano-7-deazaguanine (preQ(0)). The protein is 7-cyano-7-deazaguanine synthase of Rickettsia peacockii (strain Rustic).